Here is a 594-residue protein sequence, read N- to C-terminus: Actin-histidine N-methyltransferase (594 aa).

The segment at 1 to 22 (MGKKSRVKTQKSGTGATATVSP) is disordered. Positions 10–20 (QKSGTGATATV) are enriched in polar residues. Residues Arg-75, 104–106 (EGF), Arg-254, 275–279 (DMCNH), and 325–327 (SGF) each bind S-adenosyl-L-methionine. The SET domain occupies 94–314 (EGFEMVNFKE…AGEQIYIFYG (221 aa)). Residue Ser-513 is modified to Phosphoserine. The interval 549-594 (ENGLVNGENSIPNGTRSENESLNQESKRAVEDAKGSSSDSTAGVKE) is disordered. The span at 555-572 (GENSIPNGTRSENESLNQ) shows a compositional bias: polar residues. The segment covering 573-582 (ESKRAVEDAK) has biased composition (basic and acidic residues). Positions 583 to 594 (GSSSDSTAGVKE) are enriched in polar residues.

The protein belongs to the class V-like SAM-binding methyltransferase superfamily. SETD3 actin-histidine methyltransferase family. Interacts with MYOD1. Post-translationally, phosphorylated by GSK3B, which is required for recognition by the SCF(FBXW7) complex and subsequent degradation. In terms of processing, ubiquitinated by the SCF(FBXW7) complex following phosphorylation by GSK3B, leading to its degradation by the proteasome.

The protein resides in the cytoplasm. Its subcellular location is the nucleus. It catalyses the reaction L-histidyl-[protein] + S-adenosyl-L-methionine = N(tele)-methyl-L-histidyl-[protein] + S-adenosyl-L-homocysteine + H(+). Its function is as follows. Protein-histidine N-methyltransferase that specifically mediates 3-methylhistidine (tele-methylhistidine) methylation of actin at 'His-73'. Histidine methylation of actin is required for smooth muscle contraction of the laboring uterus during delivery. Does not have protein-lysine N-methyltransferase activity and probably only catalyzes histidine methylation of actin. The protein is Actin-histidine N-methyltransferase of Homo sapiens (Human).